Consider the following 394-residue polypeptide: Elongation factor Tu 1 (394 aa).

The tr-type G domain maps to 10-204 (KPHVNVGTIG…ALDSYIPEPE (195 aa)). Residues 19–26 (GHVDHGKT) form a G1 region. A GTP-binding site is contributed by 19-26 (GHVDHGKT). Thr-26 lines the Mg(2+) pocket. The G2 stretch occupies residues 60–64 (GITIS). The segment at 81–84 (DCPG) is G3. Residues 81–85 (DCPGH) and 136–139 (NKCD) contribute to the GTP site. The interval 136-139 (NKCD) is G4. The G5 stretch occupies residues 174 to 176 (SAL).

This sequence belongs to the TRAFAC class translation factor GTPase superfamily. Classic translation factor GTPase family. EF-Tu/EF-1A subfamily. Monomer.

The protein localises to the cytoplasm. The catalysed reaction is GTP + H2O = GDP + phosphate + H(+). Its function is as follows. GTP hydrolase that promotes the GTP-dependent binding of aminoacyl-tRNA to the A-site of ribosomes during protein biosynthesis. This Photorhabdus laumondii subsp. laumondii (strain DSM 15139 / CIP 105565 / TT01) (Photorhabdus luminescens subsp. laumondii) protein is Elongation factor Tu 1.